A 355-amino-acid chain; its full sequence is Protein RecA (355 aa).

67-74 (GPESSGKT) is an ATP binding site.

It belongs to the RecA family.

The protein resides in the cytoplasm. Its function is as follows. Can catalyze the hydrolysis of ATP in the presence of single-stranded DNA, the ATP-dependent uptake of single-stranded DNA by duplex DNA, and the ATP-dependent hybridization of homologous single-stranded DNAs. It interacts with LexA causing its activation and leading to its autocatalytic cleavage. The protein is Protein RecA of Histophilus somni (strain 2336) (Haemophilus somnus).